A 298-amino-acid chain; its full sequence is Glycine--tRNA ligase alpha subunit (298 aa).

The protein belongs to the class-II aminoacyl-tRNA synthetase family. In terms of assembly, tetramer of two alpha and two beta subunits.

It is found in the cytoplasm. The catalysed reaction is tRNA(Gly) + glycine + ATP = glycyl-tRNA(Gly) + AMP + diphosphate. In Helicobacter pylori (strain Shi470), this protein is Glycine--tRNA ligase alpha subunit.